The sequence spans 238 residues: Transcription factor MYB27 (238 aa).

2 HTH myb-type domains span residues 6 to 58 (EETL…MNYL) and 59 to 113 (NPTL…RKKQ). The Nuclear localization signal motif lies at 31 to 38 (ERRWDSLA). 2 consecutive DNA-binding regions (H-T-H motif) follow at residues 34-58 (WDSL…MNYL) and 86-109 (WSKI…RTHY).

The protein resides in the nucleus. This chain is Transcription factor MYB27, found in Arabidopsis thaliana (Mouse-ear cress).